Here is a 1217-residue protein sequence, read N- to C-terminus: Splicing factor 3B subunit 3 (1217 aa).

2 interaction with PHF5A, SF3B1 and SF3B5 regions span residues 105–119 (ETFG…VPGQ) and 145–168 (NRDA…TLVY). At Ser-156 the chain carries Phosphoserine. Interaction with SF3B1 and SF3B5 stretches follow at residues 193 to 231 (DNDP…LEEH) and 786 to 804 (RKFV…ETDH). Residues 1028 to 1049 (TYPRWVTTASLLDYDTVAGADK) form an interaction with SF3B1 region. The interaction with SF3B5 stretch occupies residues 1100-1123 (TVLSLQKTTLIPGGSESLVYTTLS). Phosphothreonine is present on Thr-1200.

This sequence belongs to the RSE1 family. As to quaternary structure, component of the 17S U2 SnRNP complex, a ribonucleoprotein complex that contains small nuclear RNA (snRNA) U2 and a number of specific proteins. Part of the SF3B subcomplex of the 17S U2 SnRNP complex. SF3B associates with the splicing subcomplex SF3A and a 12S RNA unit to form the U2 small nuclear ribonucleoproteins complex (U2 snRNP). Within the SF3B subcomplex, interacts directly with SF3B1 (via HEAT domain), SF3B5 and PHF5A. Identified in the spliceosome A complex; remains associated with the spliceosome throughout the splicing process. Component of the spliceosome B complex. Identified in the spliceosome C complex. Identified in the spliceosome E complex. Component of the minor (U12-type spliceosome) spliceosome. Within this complex, interacts with SCNM1. Associates with the STAGA transcription coactivator-HAT complex. Interacts with SUPT3H. Interacts with TAF3.

The protein resides in the nucleus. Its function is as follows. Component of the 17S U2 SnRNP complex of the spliceosome, a large ribonucleoprotein complex that removes introns from transcribed pre-mRNAs. The 17S U2 SnRNP complex (1) directly participates in early spliceosome assembly and (2) mediates recognition of the intron branch site during pre-mRNA splicing by promoting the selection of the pre-mRNA branch-site adenosine, the nucleophile for the first step of splicing. Within the 17S U2 SnRNP complex, SF3B3 is part of the SF3B subcomplex, which is required for 'A' complex assembly formed by the stable binding of U2 snRNP to the branchpoint sequence in pre-mRNA. Sequence independent binding of SF3A and SF3B subcomplexes upstream of the branch site is essential, it may anchor U2 snRNP to the pre-mRNA. May also be involved in the assembly of the 'E' complex. Also acts as a component of the minor spliceosome, which is involved in the splicing of U12-type introns in pre-mRNAs. This is Splicing factor 3B subunit 3 (SF3B3) from Pongo abelii (Sumatran orangutan).